A 289-amino-acid chain; its full sequence is 4-diphosphocytidyl-2-C-methyl-D-erythritol kinase (289 aa).

Lys10 is an active-site residue. Position 94-104 (94-104 (PVAAGLAGGSS)) interacts with ATP. Asp136 is an active-site residue.

It belongs to the GHMP kinase family. IspE subfamily.

The enzyme catalyses 4-CDP-2-C-methyl-D-erythritol + ATP = 4-CDP-2-C-methyl-D-erythritol 2-phosphate + ADP + H(+). Its pathway is isoprenoid biosynthesis; isopentenyl diphosphate biosynthesis via DXP pathway; isopentenyl diphosphate from 1-deoxy-D-xylulose 5-phosphate: step 3/6. Its function is as follows. Catalyzes the phosphorylation of the position 2 hydroxy group of 4-diphosphocytidyl-2C-methyl-D-erythritol. In Bacillus anthracis (strain CDC 684 / NRRL 3495), this protein is 4-diphosphocytidyl-2-C-methyl-D-erythritol kinase.